Here is a 64-residue protein sequence, read N- to C-terminus: MPKMKSHRGAAKRFKLTGSGLVKHYPSNKHHKNTHKKENRIRALKRNLVLSKSFQKNIREILPH.

The tract at residues 18 to 39 (GSGLVKHYPSNKHHKNTHKKEN) is disordered. A compositionally biased stretch (basic residues) spans 26 to 39 (PSNKHHKNTHKKEN).

The protein belongs to the bacterial ribosomal protein bL35 family.

The protein is Large ribosomal subunit protein bL35 of Symbiobacterium thermophilum (strain DSM 24528 / JCM 14929 / IAM 14863 / T).